A 370-amino-acid chain; its full sequence is DNA replication and repair protein RecF (370 aa).

30–37 provides a ligand contact to ATP; the sequence is GENAQGKT.

It belongs to the RecF family.

Its subcellular location is the cytoplasm. Its function is as follows. The RecF protein is involved in DNA metabolism; it is required for DNA replication and normal SOS inducibility. RecF binds preferentially to single-stranded, linear DNA. It also seems to bind ATP. The polypeptide is DNA replication and repair protein RecF (Listeria welshimeri serovar 6b (strain ATCC 35897 / DSM 20650 / CCUG 15529 / CIP 8149 / NCTC 11857 / SLCC 5334 / V8)).